The primary structure comprises 183 residues: Ribosome rescue factor SmrB (183 aa).

In terms of domain architecture, Smr spans leucine 98–glutamate 173.

The protein belongs to the SmrB family. Associates with collided ribosomes, but not with correctly translating polysomes.

Functionally, acts as a ribosome collision sensor. Detects stalled/collided disomes (pairs of ribosomes where the leading ribosome is stalled and a second ribosome has collided with it) and endonucleolytically cleaves mRNA at the 5' boundary of the stalled ribosome. Stalled/collided disomes form a new interface (primarily via the 30S subunits) that binds SmrB. Cleaved mRNA becomes available for tmRNA ligation, leading to ribosomal subunit dissociation and rescue of stalled ribosomes. In Salmonella arizonae (strain ATCC BAA-731 / CDC346-86 / RSK2980), this protein is Ribosome rescue factor SmrB.